Consider the following 329-residue polypeptide: Phytochromobilin:ferredoxin oxidoreductase, chloroplastic (329 aa).

The transit peptide at 1-45 (MALSMEFGFSIGSCFKAPNPPVLISASPNKINFTLRRRKKRFLLR) directs the protein to the chloroplast.

This sequence belongs to the HY2 family.

The protein resides in the plastid. The protein localises to the chloroplast. The enzyme catalyses (3Z)-phytochromobilin + 2 oxidized [2Fe-2S]-[ferredoxin] = biliverdin IXalpha + 2 reduced [2Fe-2S]-[ferredoxin] + 2 H(+). Catalyzes the two-electron reduction of biliverdin IX-alpha to the tetrapyrrole chromophore phytochromobilin (PPhiB). This chain is Phytochromobilin:ferredoxin oxidoreductase, chloroplastic, found in Arabidopsis thaliana (Mouse-ear cress).